The chain runs to 111 residues: Cell division protein FtsB (111 aa).

Over 1–3 the chain is Cytoplasmic; sequence MRL. The helical transmembrane segment at 4 to 21 threads the bilayer; that stretch reads ITLFLLLLLLAIQYPLWL. The Periplasmic segment spans residues 22-111; that stretch reads GKGGWLRVWD…PAALQPNHRH (90 aa). Positions 28–64 form a coiled coil; the sequence is RVWDMQKQVASQNQRNAELKQRNLKLEGEVKDLKEGT. The tract at residues 90–111 is disordered; it reads PAPKTSETPLPPPAALQPNHRH.

It belongs to the FtsB family. Part of a complex composed of FtsB, FtsL and FtsQ.

It is found in the cell inner membrane. Functionally, essential cell division protein. May link together the upstream cell division proteins, which are predominantly cytoplasmic, with the downstream cell division proteins, which are predominantly periplasmic. This chain is Cell division protein FtsB, found in Ralstonia nicotianae (strain ATCC BAA-1114 / GMI1000) (Ralstonia solanacearum).